A 143-amino-acid chain; its full sequence is ATP synthase F(0) complex subunit C2, mitochondrial (143 aa).

The N-terminal 68 residues, 1 to 68, are a transit peptide targeting the mitochondrion; sequence MYTCAKFVST…RSFQTSAISR (68 aa). The chain crosses the membrane as a helical span at residues 84–104; sequence VGVAGSGAGIGTVFGSLIIGY. At Lys-111 the chain carries N6,N6,N6-trimethyllysine. The helical transmembrane segment at 119 to 139 threads the bilayer; sequence ILGFALSEAMGLFCLMVAFLI.

It belongs to the ATPase C chain family. F-type ATPases have 2 components, CF(1) - the catalytic core - and CF(0) - the membrane proton channel. CF(1) has five subunits: alpha(3), beta(3), gamma(1), delta(1), epsilon(1). CF(0) has three main subunits: a, b and c. Interacts with DNAJC30; interaction is direct. In terms of processing, trimethylated by ATPSCKMT at Lys-111. Methylation is required for proper incorporation of the C subunit into the ATP synthase complex and mitochondrial respiration.

It is found in the mitochondrion membrane. In terms of biological role, mitochondrial membrane ATP synthase (F(1)F(0) ATP synthase or Complex V) produces ATP from ADP in the presence of a proton gradient across the membrane which is generated by electron transport complexes of the respiratory chain. F-type ATPases consist of two structural domains, F(1) - containing the extramembraneous catalytic core and F(0) - containing the membrane proton channel, linked together by a central stalk and a peripheral stalk. During catalysis, ATP synthesis in the catalytic domain of F(1) is coupled via a rotary mechanism of the central stalk subunits to proton translocation. Part of the complex F(0) domain. A homomeric c-ring of probably 10 subunits is part of the complex rotary element. This is ATP synthase F(0) complex subunit C2, mitochondrial from Ovis aries (Sheep).